A 102-amino-acid chain; its full sequence is Co-chaperonin GroES (102 aa).

This sequence belongs to the GroES chaperonin family. Heptamer of 7 subunits arranged in a ring. Interacts with the chaperonin GroEL.

Its subcellular location is the cytoplasm. Together with the chaperonin GroEL, plays an essential role in assisting protein folding. The GroEL-GroES system forms a nano-cage that allows encapsulation of the non-native substrate proteins and provides a physical environment optimized to promote and accelerate protein folding. GroES binds to the apical surface of the GroEL ring, thereby capping the opening of the GroEL channel. This chain is Co-chaperonin GroES, found in Chlamydia pneumoniae (Chlamydophila pneumoniae).